A 764-amino-acid polypeptide reads, in one-letter code: MRGNKNYYFLSLLYFLSLPILHFSSCTHKCGDIQIPFPFGIGEIGCYLDEWYQVECRPSATSGKVFPFLPKINMEVVNISLPGTNDDIFYTYPSFSSIRVKSPVASMGCSTDGNDSGLTLNFTETPFFFGDQNNLVAVGCNNKASLTNVEPTMVGCESTCTTSNNSRSIPFFNKVGCSGSVDSVTRDLLPKNYIPVCSTTKIQDDTLICNGEGCCQAKAPVGSQQLIGVTITNSTNGNLTKGGGCKVAFLTDEVYTLSNATDPEQFFSKGVTVSLGWFIQTKNHSFLQSLDCQNRGELDKGKKRTRQCTCDNHIASGMGYASCACASGYKGNPYVSDDCQDINECTEYKNPCGDTRILYRNTCINTSGGHRCIDYHIPEVMLGLGAGFFVLIVGGGIWWWRKLLRKRRMTNRKRKFFKRNGGLLLQQQLNTTQGRVEKTKLFSSRELEKATDNFNDNRVIGQGGQGTVYKGMLVDGRSVAVKKSNVVDEDKLQEFINEVIILSQINHRHVVKLLGCCLETEVPILVYEFIPNGNLFQHLHEEFDDYTALWGVRMRIAVDISGAFSYLHTAACSPIYHRDIKSTNILLDEKYRAKVSDFGTSRSVSIDHTHWTTVISGTVGYVDPEYYGSSHFTEKSDVYSFGVVLVELITGEKPVITLSETQEITGLADYFRLAMRENRLFEIIDARIRNDCKLEQVIAVANLALRCLKKTGKTRPDMREVSTALERICSAPEDFQVQIQIDEEDETTKLFRGYSGSTEIARSM.

Positions 1–26 (MRGNKNYYFLSLLYFLSLPILHFSSC) are cleaved as a signal peptide. The Extracellular portion of the chain corresponds to 27-379 (THKCGDIQIP…HRCIDYHIPE (353 aa)). N-linked (GlcNAc...) asparagine glycosylation is found at asparagine 78, asparagine 114, asparagine 121, asparagine 164, asparagine 233, asparagine 238, asparagine 259, and asparagine 283. The interval 308 to 372 (CTCDNHIASG…CINTSGGHRC (65 aa)) is atypical EGF-like. Disulfide bonds link cysteine 310–cysteine 323, cysteine 345–cysteine 363, and cysteine 352–cysteine 372. Asparagine 365 carries an N-linked (GlcNAc...) asparagine glycan. The helical transmembrane segment at 380–400 (VMLGLGAGFFVLIVGGGIWWW) threads the bilayer. Over 401-764 (RKLLRKRRMT…SGSTEIARSM (364 aa)) the chain is Cytoplasmic. Residues 454–728 (FNDNRVIGQG…REVSTALERI (275 aa)) enclose the Protein kinase domain. ATP is bound by residues 460–468 (IGQGGQGTV) and lysine 482. Tyrosine 527 is subject to Phosphotyrosine. Aspartate 579 (proton acceptor) is an active-site residue. Threonine 613 and threonine 618 each carry phosphothreonine. Tyrosine 626 is subject to Phosphotyrosine.

Belongs to the protein kinase superfamily. Ser/Thr protein kinase family.

It is found in the membrane. It catalyses the reaction L-seryl-[protein] + ATP = O-phospho-L-seryl-[protein] + ADP + H(+). The catalysed reaction is L-threonyl-[protein] + ATP = O-phospho-L-threonyl-[protein] + ADP + H(+). Putative serine/threonine-protein kinase that may function as a signaling receptor of extracellular matrix component. This is Putative wall-associated receptor kinase-like 13 (WAKL13) from Arabidopsis thaliana (Mouse-ear cress).